The chain runs to 260 residues: Ribosomal RNA small subunit methyltransferase J (260 aa).

Residues 101–102 (RD), 117–118 (ER), 153–154 (SS), and D176 contribute to the S-adenosyl-L-methionine site.

The protein belongs to the methyltransferase superfamily. RsmJ family.

The protein localises to the cytoplasm. The catalysed reaction is guanosine(1516) in 16S rRNA + S-adenosyl-L-methionine = N(2)-methylguanosine(1516) in 16S rRNA + S-adenosyl-L-homocysteine + H(+). Specifically methylates the guanosine in position 1516 of 16S rRNA. The protein is Ribosomal RNA small subunit methyltransferase J of Aliivibrio salmonicida (strain LFI1238) (Vibrio salmonicida (strain LFI1238)).